Here is a 537-residue protein sequence, read N- to C-terminus: 5,6-dihydroxyindole-2-carboxylic acid oxidase (537 aa).

An N-terminal signal peptide occupies residues 1–24 (MSAPKLLSLGCIFFPLLLFQQARA). At 25 to 477 (QFPRQCATVE…WPSREFSVPE (453 aa)) the chain is on the lumenal, melanosome side. Intrachain disulfides connect Cys-30/Cys-41, Cys-42/Cys-65, Cys-56/Cys-99, Cys-101/Cys-110, and Cys-113/Cys-122. Residues Asn-96 and Asn-104 are each glycosylated (N-linked (GlcNAc...) asparagine). An N-linked (GlcNAc...) asparagine glycan is attached at Asn-181. The Zn(2+) site is built by His-192, His-215, and His-224. 2 disulfides stabilise this stretch: Cys-258–Cys-261 and Cys-290–Cys-303. N-linked (GlcNAc...) asparagine glycans are attached at residues Asn-304 and Asn-350. His-377 and His-381 together coordinate Zn(2+). A glycan (N-linked (GlcNAc...) asparagine) is linked at Asn-385. Zn(2+) is bound at residue His-404. Residues 478-501 (IIAIAVVGALLLVALIFGTASYLI) form a helical membrane-spanning segment. Over 502 to 537 (RARRSMDEANQPLLTDQYQCYAEEYEKLQNPNQSVV) the chain is Cytoplasmic.

This sequence belongs to the tyrosinase family. In terms of assembly, monomer. Interacts with ATP7A. Interacts with SLC45A2. Requires Cu(2+) as cofactor. Zn(2+) serves as cofactor. Glycosylated. In terms of tissue distribution, pigment cells.

Its subcellular location is the melanosome membrane. It carries out the reaction 2 5,6-dihydroxyindole-2-carboxylate + O2 = 2 indole-5,6-quinone-2-carboxylate + 2 H2O. The protein operates within pigment biosynthesis; melanin biosynthesis. The activity depends critically on the nature of the bound metal ion. Catalyzes the oxidation of 5,6-dihydroxyindole-2-carboxylic acid (DHICA) in the presence of bound Cu(2+) ions, but lacks activity in the presence of bound Zn(2+) ions. Its function is as follows. Plays a role in melanin biosynthesis. Catalyzes the oxidation of 5,6-dihydroxyindole-2-carboxylic acid (DHICA) into indole-5,6-quinone-2-carboxylic acid in the presence of bound Cu(2+) ions, but not in the presence of Zn(2+). May regulate or influence the type of melanin synthesized. Also to a lower extent, capable of hydroxylating tyrosine and producing melanin. This chain is 5,6-dihydroxyindole-2-carboxylic acid oxidase, found in Homo sapiens (Human).